A 333-amino-acid polypeptide reads, in one-letter code: Nucleoid-associated protein PSPPH_1145 (333 aa).

Belongs to the YejK family.

The protein localises to the cytoplasm. The protein resides in the nucleoid. The polypeptide is Nucleoid-associated protein PSPPH_1145 (Pseudomonas savastanoi pv. phaseolicola (strain 1448A / Race 6) (Pseudomonas syringae pv. phaseolicola (strain 1448A / Race 6))).